The primary structure comprises 61 residues: Probable pancreatic secretory proteinase inhibitor (61 aa).

The Kazal-like domain maps to 6–61; that stretch reads LYRKPSCGEMSAMHACPMNFAPVCGTDGNTYPNECSLCFQRQNTKTDILITKDDRC. Intrachain disulfides connect Cys-12-Cys-43, Cys-21-Cys-40, and Cys-29-Cys-61.

The protein resides in the secreted. The protein is Probable pancreatic secretory proteinase inhibitor of Anguilla anguilla (European freshwater eel).